The sequence spans 131 residues: Large-conductance mechanosensitive channel (131 aa).

The next 2 membrane-spanning stretches (helical) occupy residues 21-41 and 76-96; these read VGVIIGGAFGKIVSSLVADVI and GMFIQNIFDFIIIAFAIFLMI.

Belongs to the MscL family. In terms of assembly, homopentamer.

The protein localises to the cell inner membrane. Its function is as follows. Channel that opens in response to stretch forces in the membrane lipid bilayer. May participate in the regulation of osmotic pressure changes within the cell. This is Large-conductance mechanosensitive channel from Histophilus somni (strain 129Pt) (Haemophilus somnus).